Here is a 251-residue protein sequence, read N- to C-terminus: 5-oxoprolinase subunit A (251 aa).

Belongs to the LamB/PxpA family. In terms of assembly, forms a complex composed of PxpA, PxpB and PxpC.

It catalyses the reaction 5-oxo-L-proline + ATP + 2 H2O = L-glutamate + ADP + phosphate + H(+). Catalyzes the cleavage of 5-oxoproline to form L-glutamate coupled to the hydrolysis of ATP to ADP and inorganic phosphate. The polypeptide is 5-oxoprolinase subunit A (Paracidovorax citrulli (strain AAC00-1) (Acidovorax citrulli)).